A 324-amino-acid polypeptide reads, in one-letter code: MSSTTVRPSVNALATPLVEALVADAAKLRLSVSAKSGEARLVDAGAQARGSIEAGRRIAEICLGGLGTVTIAPAGPVAAWPVTVTVHSADPVLACLGSQYAGWSLADEGGSSGFFALGSGPGRAAAAAEHLFEELHYRDHAAQIALVLESASAPPASVVAKVAEAAGVTPDAVTFIYAPTQSLAGATQVVARVLEVALHKAHSVGFDLAKVVDGIGAAPLSPPHPDFIQAMGRTNDAIIYGGRVQLFVEADDAEARGLAEALPSTTSRDHGAPFAEIFARFNGDFYAIDKHLFSPAEVVVTSLLSGTSHRAGRLVPELVERSFA.

The protein belongs to the MCH family.

Its subcellular location is the cytoplasm. It carries out the reaction 5,10-methenyl-5,6,7,8-tetrahydromethanopterin + H2O = N(5)-formyl-5,6,7,8-tetrahydromethanopterin + H(+). It participates in one-carbon metabolism; formaldehyde degradation; formate from formaldehyde (H(4)MPT route): step 3/5. Functionally, catalyzes the hydrolysis of methenyl-H(4)MPT(+) to 5-formyl-H(4)MPT. This Methylobacterium sp. (strain 4-46) protein is Methenyltetrahydromethanopterin cyclohydrolase.